A 196-amino-acid polypeptide reads, in one-letter code: uncharacterized protein (196 aa).

One can recognise a Macro domain in the interval 1-183 (MREFHYGVHM…RFLFILSDLG (183 aa)).

This sequence belongs to the MacroD-type family.

This is an uncharacterized protein from Thermoplasma acidophilum (strain ATCC 25905 / DSM 1728 / JCM 9062 / NBRC 15155 / AMRC-C165).